Here is a 371-residue protein sequence, read N- to C-terminus: Putative agmatine deiminase (371 aa).

Cysteine 361 functions as the Amidino-cysteine intermediate in the catalytic mechanism.

It belongs to the agmatine deiminase family.

The catalysed reaction is agmatine + H2O = N-carbamoylputrescine + NH4(+). The polypeptide is Putative agmatine deiminase (Selenomonas ruminantium).